The primary structure comprises 243 residues: NAD-dependent protein deacetylase (243 aa).

A Deacetylase sirtuin-type domain is found at 1–243 (MKHDLETLKH…VSVVKSLMTE (243 aa)). Positions 24, 35, 36, 105, 107, 108, and 123 each coordinate NAD(+). A nicotinamide-binding site is contributed by Phe-35. Nicotinamide contacts are provided by Ile-107 and Asp-108. The Proton acceptor role is filled by His-123. Cys-131, Cys-134, Cys-151, and Cys-154 together coordinate Zn(2+). Positions 192, 193, 215, and 232 each coordinate NAD(+).

Belongs to the sirtuin family. Class U subfamily. It depends on Zn(2+) as a cofactor.

Its subcellular location is the cytoplasm. It catalyses the reaction N(6)-acetyl-L-lysyl-[protein] + NAD(+) + H2O = 2''-O-acetyl-ADP-D-ribose + nicotinamide + L-lysyl-[protein]. In terms of biological role, NAD-dependent protein deacetylase which modulates the activities of several enzymes which are inactive in their acetylated form. This Staphylococcus aureus (strain COL) protein is NAD-dependent protein deacetylase.